A 474-amino-acid polypeptide reads, in one-letter code: tRNA-2-methylthio-N(6)-dimethylallyladenosine synthase (474 aa).

An MTTase N-terminal domain is found at Lys-3–Arg-120. The [4Fe-4S] cluster site is built by Cys-12, Cys-49, Cys-83, Cys-157, Cys-161, and Cys-164. In terms of domain architecture, Radical SAM core spans Arg-143 to Arg-375. The region spanning Arg-378–Arg-441 is the TRAM domain.

Belongs to the methylthiotransferase family. MiaB subfamily. Monomer. Requires [4Fe-4S] cluster as cofactor.

The protein resides in the cytoplasm. It catalyses the reaction N(6)-dimethylallyladenosine(37) in tRNA + (sulfur carrier)-SH + AH2 + 2 S-adenosyl-L-methionine = 2-methylsulfanyl-N(6)-dimethylallyladenosine(37) in tRNA + (sulfur carrier)-H + 5'-deoxyadenosine + L-methionine + A + S-adenosyl-L-homocysteine + 2 H(+). Catalyzes the methylthiolation of N6-(dimethylallyl)adenosine (i(6)A), leading to the formation of 2-methylthio-N6-(dimethylallyl)adenosine (ms(2)i(6)A) at position 37 in tRNAs that read codons beginning with uridine. In Shewanella sp. (strain MR-7), this protein is tRNA-2-methylthio-N(6)-dimethylallyladenosine synthase.